The chain runs to 197 residues: Transcription factor FapR (197 aa).

This sequence belongs to the FapR family.

Functionally, transcriptional factor involved in regulation of membrane lipid biosynthesis by repressing genes involved in fatty acid and phospholipid metabolism. The chain is Transcription factor FapR from Bacillus mycoides (strain KBAB4) (Bacillus weihenstephanensis).